The primary structure comprises 876 residues: Alanine--tRNA ligase (876 aa).

Residues H565, H569, C667, and H671 each coordinate Zn(2+).

It belongs to the class-II aminoacyl-tRNA synthetase family. The cofactor is Zn(2+).

The protein localises to the cytoplasm. It catalyses the reaction tRNA(Ala) + L-alanine + ATP = L-alanyl-tRNA(Ala) + AMP + diphosphate. In terms of biological role, catalyzes the attachment of alanine to tRNA(Ala) in a two-step reaction: alanine is first activated by ATP to form Ala-AMP and then transferred to the acceptor end of tRNA(Ala). Also edits incorrectly charged Ser-tRNA(Ala) and Gly-tRNA(Ala) via its editing domain. This chain is Alanine--tRNA ligase, found in Staphylococcus aureus (strain MSSA476).